Reading from the N-terminus, the 237-residue chain is Glutathione S-transferase L1 (237 aa).

The GST N-terminal domain occupies 29-110; that stretch reads GTTRLYISYT…YVDSNFDGPS (82 aa). Glutathione-binding positions include 39 to 40, 67 to 68, 81 to 82, and 94 to 95; these read CP, NR, KV, and ES. A GST C-terminal domain is found at 112–232; sequence YPEDSAKREF…KTDSEYVVNY (121 aa).

It belongs to the GST superfamily. Lambda family.

The protein localises to the cytoplasm. It is found in the cytosol. It catalyses the reaction RX + glutathione = an S-substituted glutathione + a halide anion + H(+). In terms of biological role, catalyzes the glutathione-dependent reduction of S-glutathionylquercetin to quercetin. In vitro, possesses glutathione-dependent thiol transferase activity toward 2-hydroxyethyl disulfide (HED). This chain is Glutathione S-transferase L1 (GSTL1), found in Arabidopsis thaliana (Mouse-ear cress).